A 329-amino-acid chain; its full sequence is Ferredoxin--NADP reductase 2 (329 aa).

FAD contacts are provided by T18, E37, Q45, Y50, V90, F124, D285, and S326.

This sequence belongs to the ferredoxin--NADP reductase type 2 family. Homodimer. Requires FAD as cofactor.

The catalysed reaction is 2 reduced [2Fe-2S]-[ferredoxin] + NADP(+) + H(+) = 2 oxidized [2Fe-2S]-[ferredoxin] + NADPH. This is Ferredoxin--NADP reductase 2 from Bacillus mycoides (strain KBAB4) (Bacillus weihenstephanensis).